The following is a 176-amino-acid chain: Probable DNA-directed RNA polymerase subunit delta (176 aa).

Positions 14 to 81 (KSFIDMAYTL…GENLWGLRDW (68 aa)) constitute an HTH HARE-type domain. The disordered stretch occupies residues 114 to 176 (LGEDEMDDDD…DFEDEEDFKA (63 aa)). Acidic residues-rich tracts occupy residues 116-145 (EDEM…QVEE) and 153-176 (VIEE…DFKA).

It belongs to the RpoE family. As to quaternary structure, RNAP is composed of a core of 2 alpha, a beta and a beta' subunits. The core is associated with a delta subunit and one of several sigma factors.

Functionally, participates in both the initiation and recycling phases of transcription. In the presence of the delta subunit, RNAP displays an increased specificity of transcription, a decreased affinity for nucleic acids, and an increased efficiency of RNA synthesis because of enhanced recycling. The polypeptide is Probable DNA-directed RNA polymerase subunit delta (Staphylococcus aureus (strain bovine RF122 / ET3-1)).